A 64-amino-acid chain; its full sequence is Temporin-ALh (64 aa).

A signal peptide spans 1 to 22 (MFPLKKSLLLLFFLATINLSLC). Positions 23–46 (EQERNAEEERRDEPDERNAEVEKR) are excised as a propeptide. Ser62 is subject to Serine amide.

The protein belongs to the frog skin active peptide (FSAP) family. Temporin subfamily. Expressed by the skin glands.

It localises to the secreted. Its function is as follows. Antimicrobial peptide with activity against Gram-positive and Gram-negative bacteria and against fungi. Has been tested against S.aureus (MIC=2.5 ug/mL), B.pumilus (MIC=7.5 ug/mL), B.cereus (MIC=75.0 ug/mL), E.coli (MIC=5.0 ug/mL), B.dysenteriae (MIC=20.0 ug/mL), A.cacoaceticus (MIC=60.0 ug/mL), P.aeruginosa (MIC=2.5 ug/mL) and C.albicans (MIC=2.5 ug/mL). Also shows a weak hemolytic activity. This chain is Temporin-ALh, found in Amolops loloensis (Lolokou Sucker Frog).